The chain runs to 228 residues: Large ribosomal subunit protein uL16 (228 aa).

It belongs to the universal ribosomal protein uL16 family. Component of the small ribosomal subunit. Mature ribosomes consist of a small (40S) and a large (60S) subunit. The 40S subunit contains about 33 different proteins and 1 molecule of RNA (18S). The 60S subunit contains about 49 different proteins and 3 molecules of RNA (25S, 5.8S and 5S).

In Pinus taeda (Loblolly pine), this protein is Large ribosomal subunit protein uL16 (RPL10).